We begin with the raw amino-acid sequence, 220 residues long: Protein-methionine-sulfoxide reductase heme-binding subunit MsrQ (220 aa).

6 helical membrane-spanning segments follow: residues 20 to 40 (LWLL…LGAT), 52 to 72 (EHLL…VTPI), 86 to 106 (ALGL…MVLD), 122 to 142 (PFIT…LTSN), 153 to 173 (WSSL…HFLM), and 175 to 195 (VKSW…LLLW).

The protein belongs to the MsrQ family. As to quaternary structure, heterodimer of a catalytic subunit (MsrP) and a heme-binding subunit (MsrQ). Requires FMN as cofactor. Heme b is required as a cofactor.

Its subcellular location is the cell inner membrane. Functionally, part of the MsrPQ system that repairs oxidized periplasmic proteins containing methionine sulfoxide residues (Met-O), using respiratory chain electrons. Thus protects these proteins from oxidative-stress damage caused by reactive species of oxygen and chlorine generated by the host defense mechanisms. MsrPQ is essential for the maintenance of envelope integrity under bleach stress, rescuing a wide series of structurally unrelated periplasmic proteins from methionine oxidation. MsrQ provides electrons for reduction to the reductase catalytic subunit MsrP, using the quinone pool of the respiratory chain. The chain is Protein-methionine-sulfoxide reductase heme-binding subunit MsrQ from Brucella abortus (strain S19).